The following is a 384-amino-acid chain: Cytochrome b (384 aa).

Transmembrane regions (helical) follow at residues 32 to 52, 75 to 96, 111 to 131, and 176 to 196; these read FGSL…FLSM, FLLR…YFHI, WRVG…GYVL, and FFSL…VHLI. Positions 81 and 95 each coordinate heme b. H180 and H194 together coordinate heme b. H199 is an a ubiquinone binding site. 4 consecutive transmembrane segments (helical) span residues 224 to 244, 286 to 306, 318 to 338, and 345 to 366; these read SKDW…VYLM, FGGV…PLLH, FGRM…WIGS, and FIII…LIPL.

The protein belongs to the cytochrome b family. As to quaternary structure, the main subunits of complex b-c1 are: cytochrome b, cytochrome c1 and the Rieske protein. Heme b serves as cofactor.

The protein resides in the mitochondrion inner membrane. Functionally, component of the ubiquinol-cytochrome c reductase complex (complex III or cytochrome b-c1 complex) that is part of the mitochondrial respiratory chain. The b-c1 complex mediates electron transfer from ubiquinol to cytochrome c. Contributes to the generation of a proton gradient across the mitochondrial membrane that is then used for ATP synthesis. The polypeptide is Cytochrome b (MT-CYB) (Acropora tenuis (Purple tipped acropora)).